We begin with the raw amino-acid sequence, 87 residues long: Phosphoribosyl-ATP pyrophosphatase (87 aa).

This sequence belongs to the PRA-PH family.

The protein localises to the cytoplasm. It catalyses the reaction 1-(5-phospho-beta-D-ribosyl)-ATP + H2O = 1-(5-phospho-beta-D-ribosyl)-5'-AMP + diphosphate + H(+). It participates in amino-acid biosynthesis; L-histidine biosynthesis; L-histidine from 5-phospho-alpha-D-ribose 1-diphosphate: step 2/9. This chain is Phosphoribosyl-ATP pyrophosphatase, found in Saccharopolyspora erythraea (strain ATCC 11635 / DSM 40517 / JCM 4748 / NBRC 13426 / NCIMB 8594 / NRRL 2338).